The chain runs to 238 residues: Ribitol-5-phosphate cytidylyltransferase 1 (238 aa).

CTP contacts are provided by residues 7–10 (LAGG) and 81–87 (GSDRNDT).

The protein belongs to the IspD/TarI cytidylyltransferase family. TarI subfamily.

It catalyses the reaction D-ribitol 5-phosphate + CTP + H(+) = CDP-L-ribitol + diphosphate. Its pathway is cell wall biogenesis; poly(ribitol phosphate) teichoic acid biosynthesis. Its function is as follows. Catalyzes the transfer of the cytidylyl group of CTP to D-ribitol 5-phosphate. This chain is Ribitol-5-phosphate cytidylyltransferase 1, found in Staphylococcus aureus (strain bovine RF122 / ET3-1).